The following is a 193-amino-acid chain: MRKLWGLYLGLLDNHPLVTKSLSTGFLMGTGDILAQRLEHKFKDEKSQFKLDYKRVATMSTVGIFYSGPMLHYWYRSLDIMVKGEGRSVIIKKMLIDQLLFAPVAIGGFMTVTNFINNKGELKNLENFTKELFYAVKINWLIWPAAQIINFSLVPPNLRVLYSSIISIFWGMFLSHISFDKDHHIRNQNKEIN.

The next 4 membrane-spanning stretches (helical) occupy residues Val-56–Leu-78, Ile-96–Ile-116, Leu-132–Ser-152, and Val-160–Asp-180.

The protein belongs to the peroxisomal membrane protein PXMP2/4 family.

It is found in the membrane. This Dictyostelium discoideum (Social amoeba) protein is PXMP2/4 family protein 2.